Reading from the N-terminus, the 28-residue chain is uORF1 protein (28 aa).

It localises to the host cytoplasm. Its subcellular location is the host cytoskeleton. Its function is as follows. Plays a role in the reorganization of host microtubules and intermediate filaments to form a cytoskeletal cage that surrounds the viral factories, protecting the site of viral replication. May play a role in viral infection of human cortical neurons. The sequence is that of uORF1 protein from Zika virus (isolate ZIKV/Human/French Polynesia/10087PF/2013) (ZIKV).